The chain runs to 101 residues: Small ribosomal subunit protein uS10 (101 aa).

The protein belongs to the universal ribosomal protein uS10 family. As to quaternary structure, part of the 30S ribosomal subunit.

In terms of biological role, involved in the binding of tRNA to the ribosomes. The polypeptide is Small ribosomal subunit protein uS10 (Brachyspira pilosicoli (Serpulina pilosicoli)).